Reading from the N-terminus, the 71-residue chain is Pro-MCH (71 aa).

Positions 1 to 20 are cleaved as a signal peptide; that stretch reads AKMNLSSYILILTFSLFSQG.

Belongs to the melanin-concentrating hormone family.

It is found in the secreted. This Hylobates lar (Lar gibbon) protein is Pro-MCH (PMCH).